Here is a 572-residue protein sequence, read N- to C-terminus: Proline--tRNA ligase (572 aa).

This sequence belongs to the class-II aminoacyl-tRNA synthetase family. ProS type 1 subfamily. In terms of assembly, homodimer.

It is found in the cytoplasm. It carries out the reaction tRNA(Pro) + L-proline + ATP = L-prolyl-tRNA(Pro) + AMP + diphosphate. In terms of biological role, catalyzes the attachment of proline to tRNA(Pro) in a two-step reaction: proline is first activated by ATP to form Pro-AMP and then transferred to the acceptor end of tRNA(Pro). As ProRS can inadvertently accommodate and process non-cognate amino acids such as alanine and cysteine, to avoid such errors it has two additional distinct editing activities against alanine. One activity is designated as 'pretransfer' editing and involves the tRNA(Pro)-independent hydrolysis of activated Ala-AMP. The other activity is designated 'posttransfer' editing and involves deacylation of mischarged Ala-tRNA(Pro). The misacylated Cys-tRNA(Pro) is not edited by ProRS. This Klebsiella pneumoniae subsp. pneumoniae (strain ATCC 700721 / MGH 78578) protein is Proline--tRNA ligase.